The sequence spans 422 residues: Validoxylamine A glucosyltransferase (422 aa).

The protein belongs to the glycosyltransferase 2 family. It depends on Mn(2+) as a cofactor.

It catalyses the reaction validoxylamine A + UDP-alpha-D-glucose = validamycin A + UDP + H(+). Its function is as follows. Involved in the biosynthesis of the antifungal agent validamycin A. Catalyzes the final attachment of glucose from UDP-alpha-D-glucose to validoxylamine A to yield validamycin A. UDP-glucose is the most efficient glycosyl donor, whereas GDP-glucose and ADP-glucose are much less efficient. ValG also utilizes UDP-galactose as substrate to produce the new validamycin analog, 4''-epi-validamycin A. The sequence is that of Validoxylamine A glucosyltransferase from Streptomyces hygroscopicus subsp. jinggangensis (strain 5008).